Consider the following 333-residue polypeptide: Fe-S cluster assembly protein dre2 (333 aa).

The segment at 1 to 29 is disordered; it reads MSPITLDLTSDFNPANTTGAGSSSSQPRT. Residues 7 to 28 show a composition bias toward polar residues; the sequence is DLTSDFNPANTTGAGSSSSQPR. Residues 23–158 are N-terminal SAM-like domain; the sequence is SSSQPRTLLV…KPDYAEEEAV (136 aa). The segment at 159 to 225 is linker; that stretch reads PLRFGLKRKT…EDTLLTEADL (67 aa). Positions 235, 246, 249, and 251 each coordinate [2Fe-2S] cluster. The interval 235 to 251 is fe-S binding site A; it reads CQPKPGKKRRACKDCTC. [4Fe-4S] cluster contacts are provided by C296, C299, C307, and C310. 2 short sequence motifs (cx2C motif) span residues 296–299 and 307–310; these read CGSC and CAGC. Residues 296–310 are fe-S binding site B; it reads CGSCALGDAFRCAGC.

It belongs to the anamorsin family. In terms of assembly, monomer. Interacts with tah18. Interacts with mia40. [2Fe-2S] cluster serves as cofactor. It depends on [4Fe-4S] cluster as a cofactor.

Its subcellular location is the cytoplasm. It is found in the mitochondrion intermembrane space. In terms of biological role, component of the cytosolic iron-sulfur (Fe-S) protein assembly (CIA) machinery required for the maturation of extramitochondrial Fe-S proteins. Part of an electron transfer chain functioning in an early step of cytosolic Fe-S biogenesis, facilitating the de novo assembly of a [4Fe-4S] cluster on the scaffold complex cfd1-nbp35. Electrons are transferred to dre2 from NADPH via the FAD- and FMN-containing protein tah18. Tah18-dre2 are also required for the assembly of the diferric tyrosyl radical cofactor of ribonucleotide reductase (RNR), probably by providing electrons for reduction during radical cofactor maturation in the catalytic small subunit rnr2. The chain is Fe-S cluster assembly protein dre2 from Neurospora crassa (strain ATCC 24698 / 74-OR23-1A / CBS 708.71 / DSM 1257 / FGSC 987).